Consider the following 433-residue polypeptide: Cysteine--tRNA ligase (433 aa).

Residue C4 coordinates Zn(2+). Positions P6–N16 match the 'HIGH' region motif. The Zn(2+) site is built by C188, H213, and E217. The 'KMSKS' region signature appears at K246–S250. K249 lines the ATP pocket.

Belongs to the class-I aminoacyl-tRNA synthetase family. As to quaternary structure, monomer. Requires Zn(2+) as cofactor.

The protein localises to the cytoplasm. The catalysed reaction is tRNA(Cys) + L-cysteine + ATP = L-cysteinyl-tRNA(Cys) + AMP + diphosphate. This chain is Cysteine--tRNA ligase, found in Wolbachia sp. subsp. Brugia malayi (strain TRS).